The primary structure comprises 44 residues: Thymosin beta-4 (44 aa).

Over residues 1–25 (MADKPDMAEIEKFDKSKLKKTETQE) the composition is skewed to basic and acidic residues. The tract at residues 1–44 (MADKPDMAEIEKFDKSKLKKTETQEKNPLPSKETIEQEKQAGES) is disordered. Residue Ala-2 is modified to N-acetylalanine. Lys-4 is subject to N6-acetyllysine. N6-acetyllysine; alternate is present on Lys-12. Lys-12 is covalently cross-linked (Glycyl lysine isopeptide (Lys-Gly) (interchain with G-Cter in SUMO2); alternate). Thr-23 carries the post-translational modification Phosphothreonine. An N6-acetyllysine modification is found at Lys-26. Residue Ser-31 is modified to Phosphoserine. At Lys-32 the chain carries N6-acetyllysine. Basic and acidic residues predominate over residues 33-44 (ETIEQEKQAGES). Residue Thr-34 is modified to Phosphothreonine. An N6-acetyllysine modification is found at Lys-39.

Belongs to the thymosin beta family. As to expression, originally found in thymus but it is widely distributed in many tissues.

The protein localises to the cytoplasm. It localises to the cytoskeleton. Plays an important role in the organization of the cytoskeleton. Binds to and sequesters actin monomers (G actin) and therefore inhibits actin polymerization. In terms of biological role, seraspenide inhibits the entry of hematopoietic pluripotent stem cells into the S-phase. In Oryctolagus cuniculus (Rabbit), this protein is Thymosin beta-4 (TMSB4).